The primary structure comprises 289 residues: Shikimate dehydrogenase (NADP(+)) (289 aa).

Shikimate contacts are provided by residues 22 to 24 (SRS) and threonine 69. Lysine 73 serves as the catalytic Proton acceptor. Glutamate 85 serves as a coordination point for NADP(+). Shikimate contacts are provided by asparagine 94 and aspartate 109. NADP(+) is bound by residues 134-138 (GAGGA), 158-163 (NRTLSR), and isoleucine 226. Tyrosine 228 is a shikimate binding site. Glycine 249 serves as a coordination point for NADP(+).

Belongs to the shikimate dehydrogenase family. In terms of assembly, homodimer.

It catalyses the reaction shikimate + NADP(+) = 3-dehydroshikimate + NADPH + H(+). Its pathway is metabolic intermediate biosynthesis; chorismate biosynthesis; chorismate from D-erythrose 4-phosphate and phosphoenolpyruvate: step 4/7. Involved in the biosynthesis of the chorismate, which leads to the biosynthesis of aromatic amino acids. Catalyzes the reversible NADPH linked reduction of 3-dehydroshikimate (DHSA) to yield shikimate (SA). In Brucella abortus (strain S19), this protein is Shikimate dehydrogenase (NADP(+)).